The chain runs to 35 residues: GFGALFKFLAKKVAKTVAKQAAKQGAKYVVNKQME.

Glu-35 is modified (glutamic acid 1-amide).

The protein belongs to the cationic peptide 04 (cupiennin) family. 01 subfamily. In terms of assembly, monomer. Interacts with CSTX-1 (AC P81694), CSTX-9 (AC P58604), and CSTX-13 (AC P83919). In terms of tissue distribution, expressed by the venom gland.

Its subcellular location is the secreted. In terms of biological role, has antimicrobial activity against B.subtilis, E.coli, E.faecalis, P.denitrificans, P.aeruginosa, P.putida, S.aureus, and S.epidermidis. Shows insecticidal and hemolytic activities. Probably acts by disturbing membrane function with its amphipathic structure. Synergistically increases the insecticidal activity of CSTX-1 (AC P81694), CSTX-9 (AC P58604), and CSTX-13 (AC P83919) by up to 65%. Also inhibits the formation of nitric oxide by neuronal nitric oxide synthase. This is Cupiennin-1a from Cupiennius salei (American wandering spider).